The chain runs to 776 residues: Ecdysone receptor (776 aa).

The tract at residues 1 to 290 is modulating; that stretch reads MYRLNIVSTN…GPTPRQQEEL (290 aa). The disordered stretch occupies residues 199–283; it reads NEEWISSPSP…DAKKQKKGPT (85 aa). The segment covering 204-213 has biased composition (low complexity); the sequence is SSPSPGSVPG. Composition is skewed to polar residues over residues 227-245 and 261-270; these read TTYT…STGS and SPSSSLNGYT. The segment at residues 288 to 363 is a DNA-binding region (nuclear receptor); it reads EELCLVCGDR…VGMRPECVVP (76 aa). 2 consecutive NR C4-type zinc fingers follow at residues 291 to 311 and 327 to 346; these read CLVC…CEGC and CKFG…CQEC. An NR LBD domain is found at 437–673; sequence NQMAVIYKLI…FLEEIWDVQD (237 aa). Residues 679 to 688 show a composition bias toward polar residues; that stretch reads QAQMHSHGTQ. The segment at 679–776 is disordered; it reads QAQMHSHGTQ…VPGLGMLDQV (98 aa). The segment covering 689-745 has biased composition (low complexity); it reads SSSSSSSSSSSSSNGSSNGNSSSNSNSSQHGPHPHPHGQQLTPNQQQHQQQHSQLQQ.

It belongs to the nuclear hormone receptor family. NR1 subfamily. As to quaternary structure, heterodimer of USP and ECR. Only the heterodimer is capable of high-affinity binding to ecdysone. A peak level expression is seen in the fat body of previtellogenic female mosquitos at one and two days after eclosion, levels fall three-fold at three days posteclosion.

The protein localises to the nucleus. Its function is as follows. Receptor for ecdysone. Binds to ecdysone response elements (ECRES). In Aedes aegypti (Yellowfever mosquito), this protein is Ecdysone receptor (EcR).